The sequence spans 91 residues: uncharacterized protein (91 aa).

The protein belongs to the FrmR/RcnR family.

The protein resides in the cytoplasm. This is an uncharacterized protein from Serratia marcescens.